Consider the following 231-residue polypeptide: 7-cyano-7-deazaguanine synthase (231 aa).

11–21 is a binding site for ATP; it reads LSGGLDSATTM. Residues C195, C205, C208, and C211 each coordinate Zn(2+).

The protein belongs to the QueC family. Zn(2+) serves as cofactor.

It catalyses the reaction 7-carboxy-7-deazaguanine + NH4(+) + ATP = 7-cyano-7-deazaguanine + ADP + phosphate + H2O + H(+). It functions in the pathway purine metabolism; 7-cyano-7-deazaguanine biosynthesis. In terms of biological role, catalyzes the ATP-dependent conversion of 7-carboxy-7-deazaguanine (CDG) to 7-cyano-7-deazaguanine (preQ(0)). The chain is 7-cyano-7-deazaguanine synthase from Syntrophus aciditrophicus (strain SB).